The following is a 501-amino-acid chain: MSTANKKPTESVSLNAFKQPKAFYLIFSIELWERFGYYGLQGIMAVYLVKQLGMSEADSITLFSSFSALVYGLVAIGGWLGDKILGTKRVIMLGAVVLAIGYALVAWSGHDAGIVYMGMAAIAVGNGLFKANPSSLLSTCYAKDDPRLDGAFTMYYMSVNIGSFFSMLATPWLAARYGWSTAFALSVVGMLITVVNFAFCQRWVKSYGSKPDFEPINFRNLLLTIVGIVVLIAVATWLLHNQDIARMVLGVIALGIVIIFGKEAFSMHGAARRKMIVAFILMLQAIIFFVLYSQMPTSLNFFAIRNVEHSILGIAFEPEQYQALNPFWIITGSPILAAIYNRMGDTLPMPMKFAIGMVLCSGAFLILPLGAKFANDAGIVSVNWLIASYGLQSIGELMISGLGLAMVAQLVPQRLMGFIMGSWFLTTAGANIIGGYVANLMAVPSDVTDPLMSLEVYGRVFMQIGIATAVIAVLMLLTAPKLNRMTQDDDTAEKGSKAATV.

Residues Met1–Lys21 lie on the Cytoplasmic side of the membrane. Residues Ala22–Met44 traverse the membrane as a helical segment. Over Ala45 to Ser59 the chain is Periplasmic. Residues Ile60–Leu80 traverse the membrane as a helical segment. Residues Gly81–Arg89 are Cytoplasmic-facing. The chain crosses the membrane as a helical span at residues Val90–His110. Residue Asp111 is a topological domain, periplasmic. The helical transmembrane segment at Ala112 to Asn132 threads the bilayer. At Pro133–Thr153 the chain is on the cytoplasmic side. A helical membrane pass occupies residues Met154–Ala174. Over Ala175–Gly178 the chain is Periplasmic. Residues Trp179–Phe199 form a helical membrane-spanning segment. The Cytoplasmic portion of the chain corresponds to Cys200–Arg219. A helical transmembrane segment spans residues Asn220–His240. Over Asn241 to Arg246 the chain is Periplasmic. A helical membrane pass occupies residues Met247–Met267. The Cytoplasmic portion of the chain corresponds to His268–Lys274. Residues Met275–Met295 form a helical membrane-spanning segment. Residues Pro296–Gln320 are Periplasmic-facing. A helical transmembrane segment spans residues Tyr321–Asn341. At Arg342–Lys352 the chain is on the cytoplasmic side. The chain crosses the membrane as a helical span at residues Phe353–Phe373. Topologically, residues Ala374–Asn383 are periplasmic. The helical transmembrane segment at Trp384–Leu404 threads the bilayer. Residues Ala405 to Arg414 lie on the Cytoplasmic side of the membrane. A helical membrane pass occupies residues Leu415–Gly435. Residues Tyr436–Arg459 are Periplasmic-facing. Residues Val460–Pro480 traverse the membrane as a helical segment. Residues Lys481–Val501 lie on the Cytoplasmic side of the membrane.

This sequence belongs to the major facilitator superfamily. Proton-dependent oligopeptide transporter (POT/PTR) (TC 2.A.17) family. DtpA subfamily.

It localises to the cell inner membrane. In terms of biological role, proton-dependent permease that transports di- and tripeptides. The polypeptide is Dipeptide and tripeptide permease A (Salmonella typhi).